A 357-amino-acid polypeptide reads, in one-letter code: tRNA/tmRNA (uracil-C(5))-methyltransferase (357 aa).

S-adenosyl-L-methionine contacts are provided by Q185, Y212, N217, E233, and D291. The active-site Nucleophile is the C316. The Proton acceptor role is filled by E350.

This sequence belongs to the class I-like SAM-binding methyltransferase superfamily. RNA M5U methyltransferase family. TrmA subfamily.

The enzyme catalyses uridine(54) in tRNA + S-adenosyl-L-methionine = 5-methyluridine(54) in tRNA + S-adenosyl-L-homocysteine + H(+). The catalysed reaction is uridine(341) in tmRNA + S-adenosyl-L-methionine = 5-methyluridine(341) in tmRNA + S-adenosyl-L-homocysteine + H(+). Functionally, dual-specificity methyltransferase that catalyzes the formation of 5-methyluridine at position 54 (m5U54) in all tRNAs, and that of position 341 (m5U341) in tmRNA (transfer-mRNA). This Campylobacter hominis (strain ATCC BAA-381 / DSM 21671 / CCUG 45161 / LMG 19568 / NCTC 13146 / CH001A) protein is tRNA/tmRNA (uracil-C(5))-methyltransferase.